The primary structure comprises 167 residues: HTH-type transcriptional repressor YetL (167 aa).

Residues 26–160 form the HTH marR-type domain; that stretch reads SLELFLSLFD…FVKMLGDLFE (135 aa). Positions 74–97 form a DNA-binding region, H-T-H motif; the sequence is PTELAKRSNVTKATITGLLDGLAR.

As to quaternary structure, homodimer. The N- and C-terminal helices from both subunits stabilize YetL dimer via extensive intersubunit interactions.

Binding to the yetM cis sequence is clearly inhibited by kaempferol, morin, apigenin and luteolin, slightly inhibited by quercetin and galangin, but no inhibition is observed with the other flavonoids. Flavonoid binding may induce conformational changes and modulate interaction with DNA. Its function is as follows. Negatively regulates yetM expression and its own expression. Binds specifically to corresponding single sites in the divergent yetL and yetM promoter regions, with higher affinity to the yetM region. Recognizes a 28-mer operator of double-stranded DNA that contains a palindromic sequence. This chain is HTH-type transcriptional repressor YetL (yetL), found in Bacillus subtilis (strain 168).